The sequence spans 219 residues: 2,3-bisphosphoglycerate-dependent phosphoglycerate mutase 2 (219 aa).

Residues 8-15, 21-22, Arg58, 85-88, Lys96, 112-113, and 156-157 each bind substrate; these read RHGQSIWN, TG, ERHY, RR, and GN. The active-site Tele-phosphohistidine intermediate is the His9. Catalysis depends on Glu85, which acts as the Proton donor/acceptor.

The protein belongs to the phosphoglycerate mutase family. BPG-dependent PGAM subfamily.

It catalyses the reaction (2R)-2-phosphoglycerate = (2R)-3-phosphoglycerate. It participates in carbohydrate degradation; glycolysis; pyruvate from D-glyceraldehyde 3-phosphate: step 3/5. Functionally, catalyzes the interconversion of 2-phosphoglycerate and 3-phosphoglycerate. The chain is 2,3-bisphosphoglycerate-dependent phosphoglycerate mutase 2 from Gloeobacter violaceus (strain ATCC 29082 / PCC 7421).